Consider the following 591-residue polypeptide: CTP synthase 1 (591 aa).

In terms of domain architecture, Glutamine amidotransferase type-1 spans Ser-300 to Tyr-554. Residues Cys-399, His-526, and Glu-528 each act as for GATase activity in the active site. Phosphoserine occurs at positions 571 and 575.

It belongs to the CTP synthase family.

It carries out the reaction UTP + L-glutamine + ATP + H2O = CTP + L-glutamate + ADP + phosphate + 2 H(+). It functions in the pathway pyrimidine metabolism; CTP biosynthesis via de novo pathway; CTP from UDP: step 2/2. Its function is as follows. This enzyme is involved in the de novo synthesis of CTP, a precursor of DNA, RNA and phospholipids. Catalyzes the ATP-dependent amination of UTP to CTP with either L-glutamine or ammonia as a source of nitrogen. In Danio rerio (Zebrafish), this protein is CTP synthase 1 (ctps1).